The chain runs to 509 residues: GMP synthase [glutamine-hydrolyzing] (509 aa).

Residues 4 to 193 (KILILDFGSQ…VVHICGCSQD (190 aa)) enclose the Glutamine amidotransferase type-1 domain. Residue C79 is the Nucleophile of the active site. Catalysis depends on residues H167 and E169. Positions 194-384 (WTPDAFVETT…LGIDDIILKR (191 aa)) constitute a GMPS ATP-PPase domain. 221–227 (SGGVDSS) serves as a coordination point for ATP.

Homodimer.

The enzyme catalyses XMP + L-glutamine + ATP + H2O = GMP + L-glutamate + AMP + diphosphate + 2 H(+). Its pathway is purine metabolism; GMP biosynthesis; GMP from XMP (L-Gln route): step 1/1. Catalyzes the synthesis of GMP from XMP. This is GMP synthase [glutamine-hydrolyzing] from Cytophaga hutchinsonii (strain ATCC 33406 / DSM 1761 / CIP 103989 / NBRC 15051 / NCIMB 9469 / D465).